Reading from the N-terminus, the 143-residue chain is Large ribosomal subunit protein uL11 (143 aa).

It belongs to the universal ribosomal protein uL11 family. Part of the ribosomal stalk of the 50S ribosomal subunit. Interacts with L10 and the large rRNA to form the base of the stalk. L10 forms an elongated spine to which L12 dimers bind in a sequential fashion forming a multimeric L10(L12)X complex. Post-translationally, one or more lysine residues are methylated.

Forms part of the ribosomal stalk which helps the ribosome interact with GTP-bound translation factors. This Ralstonia pickettii (strain 12J) protein is Large ribosomal subunit protein uL11.